The following is a 137-amino-acid chain: Large-conductance mechanosensitive channel (137 aa).

3 helical membrane-spanning segments follow: residues 15-35 (IDLA…NSIV), 38-58 (ILMP…MFIQ), and 80-100 (GNFI…FLFV).

This sequence belongs to the MscL family. Homopentamer.

The protein localises to the cell inner membrane. Its function is as follows. Channel that opens in response to stretch forces in the membrane lipid bilayer. May participate in the regulation of osmotic pressure changes within the cell. The protein is Large-conductance mechanosensitive channel of Bartonella quintana (strain Toulouse) (Rochalimaea quintana).